A 376-amino-acid chain; its full sequence is Deoxyuridine 5'-triphosphate nucleotidohydrolase (376 aa).

The protein belongs to the dUTPase family. It depends on Mg(2+) as a cofactor.

It catalyses the reaction dUTP + H2O = dUMP + diphosphate + H(+). Its function is as follows. Involved in nucleotide metabolism: produces dUMP, the immediate precursor of thymidine nucleotides and decreases the intracellular concentration of dUTP to avoid uracil incorporation into viral DNA. The polypeptide is Deoxyuridine 5'-triphosphate nucleotidohydrolase (Human herpesvirus 6B (strain Z29) (HHV-6 variant B)).